Consider the following 431-residue polypeptide: Serine--tRNA ligase (431 aa).

238–240 lines the L-serine pocket; sequence TAE. 269 to 271 lines the ATP pocket; sequence RSE. Glutamate 292 is an L-serine binding site. Position 356 to 359 (356 to 359) interacts with ATP; that stretch reads EISS. Serine 392 contacts L-serine.

Belongs to the class-II aminoacyl-tRNA synthetase family. Type-1 seryl-tRNA synthetase subfamily. Homodimer. The tRNA molecule binds across the dimer.

The protein localises to the cytoplasm. The catalysed reaction is tRNA(Ser) + L-serine + ATP = L-seryl-tRNA(Ser) + AMP + diphosphate + H(+). The enzyme catalyses tRNA(Sec) + L-serine + ATP = L-seryl-tRNA(Sec) + AMP + diphosphate + H(+). The protein operates within aminoacyl-tRNA biosynthesis; selenocysteinyl-tRNA(Sec) biosynthesis; L-seryl-tRNA(Sec) from L-serine and tRNA(Sec): step 1/1. In terms of biological role, catalyzes the attachment of serine to tRNA(Ser). Is also able to aminoacylate tRNA(Sec) with serine, to form the misacylated tRNA L-seryl-tRNA(Sec), which will be further converted into selenocysteinyl-tRNA(Sec). This Pectobacterium carotovorum subsp. carotovorum (strain PC1) protein is Serine--tRNA ligase.